The sequence spans 385 residues: Arginine biosynthesis bifunctional protein ArgJ (385 aa).

Residues Thr142, Lys168, Thr179, Glu259, Asn380, and Thr385 each coordinate substrate. Thr179 functions as the Nucleophile in the catalytic mechanism.

Belongs to the ArgJ family. Heterotetramer of two alpha and two beta chains.

It localises to the cytoplasm. It catalyses the reaction N(2)-acetyl-L-ornithine + L-glutamate = N-acetyl-L-glutamate + L-ornithine. It carries out the reaction L-glutamate + acetyl-CoA = N-acetyl-L-glutamate + CoA + H(+). The protein operates within amino-acid biosynthesis; L-arginine biosynthesis; L-ornithine and N-acetyl-L-glutamate from L-glutamate and N(2)-acetyl-L-ornithine (cyclic): step 1/1. It functions in the pathway amino-acid biosynthesis; L-arginine biosynthesis; N(2)-acetyl-L-ornithine from L-glutamate: step 1/4. In terms of biological role, catalyzes two activities which are involved in the cyclic version of arginine biosynthesis: the synthesis of N-acetylglutamate from glutamate and acetyl-CoA as the acetyl donor, and of ornithine by transacetylation between N(2)-acetylornithine and glutamate. This chain is Arginine biosynthesis bifunctional protein ArgJ, found in Leptospira interrogans serogroup Icterohaemorrhagiae serovar copenhageni (strain Fiocruz L1-130).